Consider the following 240-residue polypeptide: Ribosomal RNA small subunit methyltransferase G (240 aa).

S-adenosyl-L-methionine-binding positions include G80, F85, A131–E132, and R150.

This sequence belongs to the methyltransferase superfamily. RNA methyltransferase RsmG family.

It is found in the cytoplasm. Specifically methylates the N7 position of a guanine in 16S rRNA. This Dictyoglomus thermophilum (strain ATCC 35947 / DSM 3960 / H-6-12) protein is Ribosomal RNA small subunit methyltransferase G.